The primary structure comprises 57 residues: UPF0391 membrane protein Arad_3976 (57 aa).

The next 2 helical transmembrane spans lie at 4-24 and 33-53; these read WAII…SGVS and VLFA…VMAG.

It belongs to the UPF0391 family.

It localises to the cell membrane. This chain is UPF0391 membrane protein Arad_3976, found in Rhizobium rhizogenes (strain K84 / ATCC BAA-868) (Agrobacterium radiobacter).